The chain runs to 31 residues: Cyclotide cter-J (31 aa).

The cyclopeptide (Gly-Asp) cross-link spans 1–31 (GTVPCGESCVFIPCITGIAGCSCKNKVCYID). Intrachain disulfides connect Cys5/Cys21, Cys9/Cys23, and Cys14/Cys28.

Post-translationally, contains 3 disulfide bonds. In terms of processing, this is a cyclic peptide.

Probably participates in a plant defense mechanism. In Clitoria ternatea (Butterfly pea), this protein is Cyclotide cter-J.